A 287-amino-acid polypeptide reads, in one-letter code: Maleylpyruvate hydrolase (287 aa).

Residues Glu143, Glu145, and Asp174 each coordinate a divalent metal cation.

It belongs to the FAH family. As to quaternary structure, homodimer.

The enzyme catalyses 3-maleylpyruvate + H2O = maleate + pyruvate + H(+). Its activity is regulated as follows. Activated by Mn(2+). Inhibited by Ni(2+), Cd(2+), Co(2+) or Cu(2+). Functionally, involved in the degradation of gentisate. Catalyzes the hydrolysis of 3-maleylpyruvate, the ring-cleavage product of gentisate. This chain is Maleylpyruvate hydrolase, found in Aquipseudomonas alcaligenes (Pseudomonas alcaligenes).